The primary structure comprises 1312 residues: Tetratricopeptide repeat protein 21B (1312 aa).

TPR repeat units lie at residues 4–38 (TDHY…YSND), 110–143 (PKAL…SNRS), 147–180 (LVLR…NKDI), 182–213 (ALIG…YPPF), 214–247 (LPAL…DGAN), and 325–358 (AEVA…DGNH). The stretch at 365–392 (VIQCQILQGQLEEAEQQLDFLHEIQESI) forms a coiled coil. TPR repeat units lie at residues 493 to 526 (TEPL…DTAC), 528 to 560 (DFHL…NFKV), 564 to 597 (PLYH…QEMK), 615 to 648 (VSIY…FGGT), 720 to 753 (PHTS…NPQD), 755 to 787 (SLAN…SGQD), 789 to 820 (LCCD…EPVS), 829 to 861 (AKCL…QQRI), 881 to 914 (SEIC…SQDS), 916 to 947 (VKLQ…HSFK), 948 to 981 (EEAA…NPDN), 983 to 1015 (AVLS…SSRT), 1019 to 1052 (PGYN…SEWG), 1193 to 1226 (EKSW…NKSC), 1228 to 1260 (KAYE…SNQS), and 1262 to 1295 (PAVG…HPTY).

It belongs to the TTC21 family. Component of the IFT complex A (IFT-A).

Functionally, component of the IFT complex A (IFT-A), a complex required for retrograde ciliary transport and entry into cilia of G protein-coupled receptors (GPCRs). Negatively modulates the SHH signal transduction. This Xenopus laevis (African clawed frog) protein is Tetratricopeptide repeat protein 21B (ttc21b).